The following is a 137-amino-acid chain: Large ribosomal subunit protein uL16 (137 aa).

This sequence belongs to the universal ribosomal protein uL16 family. Part of the 50S ribosomal subunit.

Binds 23S rRNA and is also seen to make contacts with the A and possibly P site tRNAs. The polypeptide is Large ribosomal subunit protein uL16 (Anaplasma phagocytophilum (strain HZ)).